A 157-amino-acid polypeptide reads, in one-letter code: Protein NrdI (157 aa).

Belongs to the NrdI family.

Probably involved in ribonucleotide reductase function. This is Protein NrdI from Mycoplasma capricolum subsp. capricolum (strain California kid / ATCC 27343 / NCTC 10154).